Here is a 143-residue protein sequence, read N- to C-terminus: Flagellar assembly factor FliW (143 aa).

Belongs to the FliW family. Interacts with flagellin in a 1:1 complex. Two molecules interact with each CsrA dimer; cannot interact with both flagellin and CsrA simultaneously. Has a higher affinity for CsrA than for flagellin. Interacts directly with flagellin (hag), forms a 3-way complex of Hag, FliS and FliW in which Flis and FliW do not directly interact. Interaction with Hag may occur via the C-terminus of Hag.

Its subcellular location is the cytoplasm. In terms of biological role, acts as an anti-CsrA protein, binds CsrA and prevents it from repressing translation of its target genes, one of which is flagellin. Binds to flagellin (hag), which is implicated in polymerization, and participates in the assembly of the flagellum. An antagonist to translational regulator CsrA, it binds CsrA at an allosteric site and non-competitively inhibits CsrA binding to hag RNA. Partner switching by flagellin between FliW and CsrA provides a flagellar assembly checkpoint to tightly control the timing of flagellin synthesis. Flagellin binds to assembly factor FliW, freeing translation regulator CsrA to repress translation of the flagellin mRNA. When the flagellar hook is assembled flagellin is secreted, depleting intracellular flagellin, which frees FliW to interact with CsrA and inhibits CsrA binding to mRNA. This derepresses flagellin translation and provides protein for flagellar assembly. Once the flagellar filament is completed cytoplasmic flagellin levels rise and CsrA translation repression of flagellin reinitiates. Binds to CsrA and displaces it from hag mRNA. Binds to hag mRNA itself, but only at much higher concentrations than those required to displace CsrA. The chain is Flagellar assembly factor FliW from Bacillus subtilis (strain 168).